We begin with the raw amino-acid sequence, 246 residues long: MGKRILVQRRGRGGSQFRSPSWKRDGPVRYLPLEATSGRGYVVELLHEPGLNAPVARIVTESGAEFFNYAAEGLYVGQVIEMGSGATPKAGNIMILGEIPEGTMIFNVEKRAGDGGKYARSSGTYAVVVGQKPEENKTIIRLPSGRVIEVDARGRATVGIVAGGGRIEKPFLKAGKKYHRARAKAWKYPTVRGKAMSPYAHPHGGGSHQKGGTPVPKTAPPGQKVGFIGSRCTGRGCVRARAQQKQ.

The tract at residues 196–226 is disordered; that stretch reads MSPYAHPHGGGSHQKGGTPVPKTAPPGQKVG.

The protein belongs to the universal ribosomal protein uL2 family. In terms of assembly, part of the 50S ribosomal subunit. Forms a bridge to the 30S subunit in the 70S ribosome.

In terms of biological role, one of the primary rRNA binding proteins. Required for association of the 30S and 50S subunits to form the 70S ribosome, for tRNA binding and peptide bond formation. It has been suggested to have peptidyltransferase activity; this is somewhat controversial. Makes several contacts with the 16S rRNA in the 70S ribosome. The sequence is that of Large ribosomal subunit protein uL2 from Pyrobaculum arsenaticum (strain DSM 13514 / JCM 11321 / PZ6).